The sequence spans 146 residues: D-aminoacyl-tRNA deacylase (146 aa).

The Gly-cisPro motif, important for rejection of L-amino acids motif lies at 137 to 138 (GP).

Belongs to the DTD family. Homodimer.

The protein localises to the cytoplasm. It carries out the reaction glycyl-tRNA(Ala) + H2O = tRNA(Ala) + glycine + H(+). It catalyses the reaction a D-aminoacyl-tRNA + H2O = a tRNA + a D-alpha-amino acid + H(+). Functionally, an aminoacyl-tRNA editing enzyme that deacylates mischarged D-aminoacyl-tRNAs. Also deacylates mischarged glycyl-tRNA(Ala), protecting cells against glycine mischarging by AlaRS. Acts via tRNA-based rather than protein-based catalysis; rejects L-amino acids rather than detecting D-amino acids in the active site. By recycling D-aminoacyl-tRNA to D-amino acids and free tRNA molecules, this enzyme counteracts the toxicity associated with the formation of D-aminoacyl-tRNA entities in vivo and helps enforce protein L-homochirality. This is D-aminoacyl-tRNA deacylase from Bacillus cereus (strain Q1).